The following is a 588-amino-acid chain: Secreted triacylglycerol lipase LIP1 (588 aa).

The first 20 residues, 1-20, serve as a signal peptide directing secretion; that stretch reads MRFSGFVSGLGLGLLTAVSA. S258 (acyl-ester intermediate) is an active-site residue. An N-linked (GlcNAc...) asparagine glycan is attached at N400.

This sequence belongs to the type-B carboxylesterase/lipase family.

Its subcellular location is the secreted. The enzyme catalyses a triacylglycerol + H2O = a diacylglycerol + a fatty acid + H(+). Its function is as follows. Secreted acylglycerol lipase required for efficient utilization of saturated triglyceride lipids. Is not involved in virulence. In Gibberella zeae (strain ATCC MYA-4620 / CBS 123657 / FGSC 9075 / NRRL 31084 / PH-1) (Wheat head blight fungus), this protein is Secreted triacylglycerol lipase LIP1.